The chain runs to 1252 residues: Nephrin (1252 aa).

An N-terminal signal peptide occupies residues 1 to 35; that stretch reads MGAKRVTVRGARTSPIHRMSSLTPLLLMGMLTSGL. Over 36–1078 the chain is Extracellular; the sequence is AESPVPTSAP…PGPPRLPLLP (1043 aa). Ig-like C2-type domains follow at residues 39–144, 149–247, 256–347, 354–448, 454–554, and 558–649; these read PVPT…VILS, PKVL…ASFT, PPVI…RSIT, PSAI…KSLT, PAQK…TQLV, and PPTN…ETVS. Asn-54 carries an N-linked (GlcNAc...) asparagine glycan. Disulfide bonds link Cys-67/Cys-125, Cys-174/Cys-231, and Cys-279/Cys-331. An N-linked (GlcNAc...) asparagine glycan is attached at Asn-370. An intrachain disulfide couples Cys-375 to Cys-431. Ser-446 bears the Phosphoserine mark. Residues Cys-479 and Cys-542 are joined by a disulfide bond. N-linked (GlcNAc...) asparagine glycosylation is found at Asn-561, Asn-578, Asn-591, and Asn-722. A disulfide bond links Cys-581 and Cys-637. 2 Ig-like C2-type domains span residues 754–846 and 852–953; these read PTIR…LVRL and PQVD…VSIS. 2 cysteine pairs are disulfide-bonded: Cys-775/Cys-830 and Cys-877/Cys-934. The Fibronectin type-III domain maps to 957–1052; that stretch reads PPLGLKVVSI…IQVSVTTPGP (96 aa). Positions 1043–1067 are disordered; that stretch reads IQVSVTTPGPDQAPEDTDHQLPTEL. A helical transmembrane segment spans residues 1079-1099; the sequence is VLFAVGGLLLLSNASCVGGLL. Over 1100-1252 the chain is Cytoplasmic; sequence WRRRLRRLAE…LPFELRGHLV (153 aa). Position 1112 is a phosphoserine (Ser-1112). A compositionally biased stretch (basic and acidic residues) spans 1113–1127; the sequence is EKTEAGSEDRIRNEY. The interval 1113–1144 is disordered; that stretch reads EKTEAGSEDRIRNEYEESQWTGDRDTRSSTVS. The residue at position 1115 (Thr-1115) is a Phosphothreonine. Ser-1119 carries the phosphoserine modification. Tyr-1204 is modified (phosphotyrosine; by FYN).

It belongs to the immunoglobulin superfamily. In terms of assembly, interacts with NPHS2 and with CD2AP (via C-terminal domain). Self-associates (via the Ig-like domains). Also interacts (via the Ig-like domains) with KIRREL1/NEPH1 and KIRREL2; the interaction with KIRREL1 is dependent on KIRREL1 glycosylation. Interacts with KIRREL3. Interacts with MAGI1 (via PDZ 2 and 3 domains) forming a tripartite complex with IGSF5/JAM4. Interacts with DDN; the interaction is direct. Forms a complex with ACTN4, CASK, IQGAP1, MAGI2, SPTAN1 and SPTBN1. Interacts with phosphatidylinositol 3-kinase regulatory subunit PIK3R1; the interaction is reduced by high glucose levels. In terms of processing, phosphorylated at Tyr-1204 by FYN, leading to the recruitment and activation of phospholipase C-gamma-1/PLCG1. Tyrosine phosphorylation is reduced by high glucose levels. Dephosphorylated by tensin TNS2 which leads to reduced binding of NPHN1 to PIK3R1. Strongly expressed in the podocytes of kidney glomeruli (at protein level) and at lower levels in the spleen.

It localises to the cell membrane. In terms of biological role, seems to play a role in the development or function of the kidney glomerular filtration barrier. Regulates glomerular vascular permeability. May anchor the podocyte slit diaphragm to the actin cytoskeleton. Plays a role in skeletal muscle formation through regulation of myoblast fusion. The sequence is that of Nephrin (Nphs1) from Rattus norvegicus (Rat).